The sequence spans 424 residues: Inhibin beta A chain (424 aa).

The N-terminal stretch at 1 to 20 (MPLLWLRGFLLASCWIIVRS) is a signal peptide. Residues 21-308 (SPTPGSEGHG…EDHPHRRRRR (288 aa)) constitute a propeptide that is removed on maturation. An N-linked (GlcNAc...) asparagine glycan is attached at Asn-165. The span at 264 to 275 (EVDGDGKKKDGS) shows a compositional bias: basic and acidic residues. Residues 264-306 (EVDGDGKKKDGSDGGLEEEKEQSHRPFLMLQARQSEDHPHRRR) form a disordered region. 4 cysteine pairs are disulfide-bonded: Cys-312–Cys-320, Cys-319–Cys-389, Cys-348–Cys-421, and Cys-352–Cys-423.

The protein belongs to the TGF-beta family. As to quaternary structure, dimeric, linked by one or more disulfide bonds. Inhibin A is a dimer of alpha/INHA and beta-A/INHBA. Activin A is a homodimer of beta-A/INHBA. Activin AB is a dimer of beta-A/INHBA and beta-B/INHBB. Interacts with FST and FSTL3; these interactions prevent activin A interaction to its type II receptor. Activin A interacts with ACVR2A. Activin A interacts with BMPR2. Inhibin A interacts with ACVR1; this interaction creates a non-signaling complex (NSC) that inhibits ACVR1-mediated BMP signaling. Inhibin A interacts with ACVR2A. As to expression, uterus, ovary and liver.

The protein resides in the secreted. Its function is as follows. Inhibins/activins are involved in regulating a number of diverse functions such as hypothalamic and pituitary hormone secretion, gonadal hormone secretion, germ cell development and maturation, erythroid differentiation, insulin secretion, nerve cell survival, embryonic axial development or bone growth, depending on their subunit composition. Functionally, activin A is a homodimer of INHBA that plays a role in several essential biological processes including embryonic development, stem cell maintenance and differentiation, haematopoiesis, cell proliferation and tissue fibrosis. Signals through type I (such as ACVR1B or ACVR1C) and type II receptors (such as ACVR2A, ACVR2B or BMPR2) which, upon ligand binding, phosphorylate SMAD2 and SMAD3 intracellular signaling mediators that form a complex with SMAD4, translocate to the nucleus and modulate gene expression. Can also activate alternative non-canonical intracellular signaling pathways including the p38 MAPK, extracellular signal-regulated kinases 1/2 (ERK1/2) and c-Jun N-terminal kinases (JNKs) to modulate cell migration and differentiation. Alternatively, promotes osteoblastic differentiation via ACVRL1-SMAD1/5/9 pathway. In addition, can engage the type I receptor ACVR1 to form an ACVR1-activin A-type II receptor non-signaling complex (NSC) that renders receptors unavailable for engagement with BMPs, hence resulting in an apparent inhibition of ACVR1-mediated BMP signaling. Inhibin A is a dimer of alpha/INHA and beta-A/INHBA that functions as a feedback regulator in the hypothalamic-pituitary-gonadal (HPG) axis. Inhibits the secretion of FSH from the anterior pituitary gland by acting on pituitary gonadotrope cells. Antagonizes activin A by binding to the proteoglycan, betaglycan, and forming a stable complex with and, thereby, sequestering type II activin receptors while excluding type I receptor. This chain is Inhibin beta A chain (Inhba), found in Mus musculus (Mouse).